A 599-amino-acid chain; its full sequence is Zinc finger BED domain-containing protein 3 (599 aa).

Positions 70–104 (LNGGMGSPGNGPGTPLSRNNYAHHHQQHQNQQHVG) are disordered. Residues 72 to 81 (GGMGSPGNGP) are compositionally biased toward gly residues. Residues 123–176 (VKTAKVWRYFDELPTIEQAAECRICRKKIKATNSSTTGMIRHLRSCHVQEYQLV) form a BED-type zinc finger. Zn(2+) contacts are provided by Cys-144, Cys-147, His-164, and His-169. 2 disordered regions span residues 208-283 (GIEN…QCQN) and 440-491 (ATSS…SSID). Composition is skewed to low complexity over residues 223–246 (SQKSPSASSSASDTASSASSSHFS) and 268–283 (SNSILNLSQSQNQCQN). The segment covering 440-455 (ATSSYEDVSVNESQMA) has biased composition (polar residues). A compositionally biased stretch (acidic residues) spans 460–483 (GDEEEEIMEEEVEEDENVEIEDDT).

In terms of tissue distribution, expressed in neuronal cell bodies in the ventral cord and HSN neurons.

The protein localises to the nucleus. Its function is as follows. Probable transcription factor. Involved in vulval organogenesis. During vulval development, may play a role in the regulation of cell cycle regulators such as cul-1. Positively modulates expression of homeobox protein lin-39, perhaps by binding to regulatory regions of the lin-39 gene, acting in the vulval lineage. Plays a role in larval molting. In Caenorhabditis elegans, this protein is Zinc finger BED domain-containing protein 3.